The sequence spans 123 residues: MALSKEDILTWLEEAKTSEVVELITAIEEKFGVTAAAVAVAAGSGPASVDAEEQTEFDVMLMSFGDSKINVIKEVRAVTGLGLGEAKALVEAAPKAIKEGVSKADAEDIKKKLEAVGAKVEIK.

This sequence belongs to the bacterial ribosomal protein bL12 family. Homodimer. Part of the ribosomal stalk of the 50S ribosomal subunit. Forms a multimeric L10(L12)X complex, where L10 forms an elongated spine to which 2 to 4 L12 dimers bind in a sequential fashion. Binds GTP-bound translation factors.

Functionally, forms part of the ribosomal stalk which helps the ribosome interact with GTP-bound translation factors. Is thus essential for accurate translation. The chain is Large ribosomal subunit protein bL12 from Borrelia turicatae (strain 91E135).